We begin with the raw amino-acid sequence, 101 residues long: Small ribosomal subunit protein uS14 (101 aa).

The protein belongs to the universal ribosomal protein uS14 family. Part of the 30S ribosomal subunit. Contacts proteins S3 and S10.

Functionally, binds 16S rRNA, required for the assembly of 30S particles and may also be responsible for determining the conformation of the 16S rRNA at the A site. The protein is Small ribosomal subunit protein uS14 of Psychromonas ingrahamii (strain DSM 17664 / CCUG 51855 / 37).